The chain runs to 577 residues: Calcium-dependent protein kinase 22 (577 aa).

Residue G2 is the site of N-myristoyl glycine attachment. The Protein kinase domain occupies 105–368 (YRLGAELGRG…AKEVLEHPWL (264 aa)). ATP-binding positions include 111-119 (LGRGEFGVT) and K134. Catalysis depends on D234, which acts as the Proton acceptor. The tract at residues 374–404 (APNVSLGEIVRSRLMQFSAMNKFKKKALGVV) is autoinhibitory domain. EF-hand domains are found at residues 411 to 446 (EEMDKYTQMFHKMDKDNSGNLTLEDLKLGLQINGHP), 447 to 482 (VPETEIEMLLEAGDIDGNGTLDCEEFVTVLLHIKKM), 483 to 518 (SNEEYLPKAFKFFDKDGNGFIEMEELMDALGDELGP), and 520 to 553 (EQVVKDIIRDIDTDKDGRISYQEFESMMISGSDW). Positions 424, 426, 428, 430, 435, 460, 462, 464, 466, 471, 496, 498, 500, 507, 531, 533, 535, 537, and 542 each coordinate Ca(2+).

This sequence belongs to the protein kinase superfamily. Ser/Thr protein kinase family. CDPK subfamily.

It is found in the membrane. The catalysed reaction is L-seryl-[protein] + ATP = O-phospho-L-seryl-[protein] + ADP + H(+). It carries out the reaction L-threonyl-[protein] + ATP = O-phospho-L-threonyl-[protein] + ADP + H(+). Its activity is regulated as follows. Activated by calcium. Autophosphorylation may play an important role in the regulation of the kinase activity. In terms of biological role, may play a role in signal transduction pathways that involve calcium as a second messenger. In Oryza sativa subsp. japonica (Rice), this protein is Calcium-dependent protein kinase 22.